The sequence spans 151 residues: MSQIQTLHSLLEPTVTGLGYELVGVELTGAKGNRTLRVYIDTPAGIRLEDCEAVSHQVSGLLDVEDPIEGAYNLEVSSPGLDRPIFKSADYDRFSGERIKLRLLELYEGRRRVKGVLLGLDGEFVRVRDVDGVELRIPLELIDRARLDLEP.

Belongs to the RimP family.

It is found in the cytoplasm. In terms of biological role, required for maturation of 30S ribosomal subunits. This Halorhodospira halophila (strain DSM 244 / SL1) (Ectothiorhodospira halophila (strain DSM 244 / SL1)) protein is Ribosome maturation factor RimP.